Reading from the N-terminus, the 321-residue chain is Tetraacyldisaccharide 4'-kinase (321 aa).

54 to 61 (SVGGTGKT) serves as a coordination point for ATP.

It belongs to the LpxK family.

The catalysed reaction is a lipid A disaccharide + ATP = a lipid IVA + ADP + H(+). Its pathway is glycolipid biosynthesis; lipid IV(A) biosynthesis; lipid IV(A) from (3R)-3-hydroxytetradecanoyl-[acyl-carrier-protein] and UDP-N-acetyl-alpha-D-glucosamine: step 6/6. Its function is as follows. Transfers the gamma-phosphate of ATP to the 4'-position of a tetraacyldisaccharide 1-phosphate intermediate (termed DS-1-P) to form tetraacyldisaccharide 1,4'-bis-phosphate (lipid IVA). The polypeptide is Tetraacyldisaccharide 4'-kinase (Rickettsia bellii (strain OSU 85-389)).